The sequence spans 383 residues: Putative dehydratase subunit YjiM (383 aa).

The protein belongs to the FldB/FldC dehydratase alpha/beta subunit family.

The sequence is that of Putative dehydratase subunit YjiM (yjiM) from Escherichia coli (strain K12).